A 972-amino-acid polypeptide reads, in one-letter code: 116 kDa U5 small nuclear ribonucleoprotein component (972 aa).

Met-1 carries the post-translational modification N-acetylmethionine. The disordered stretch occupies residues 1-54 (MDTDLYDEFGNYIGPELDSDEDDDELGRETKDLDEMDDDDDDDDIGDHDDDHPG). Acidic residues-rich tracts occupy residues 17–26 (LDSDEDDDEL) and 34–48 (DEMD…IGDH). Position 19 is a phosphoserine (Ser-19). A Glycyl lysine isopeptide (Lys-Gly) (interchain with G-Cter in SUMO1); alternate cross-link involves residue Lys-64. Lys-64 is covalently cross-linked (Glycyl lysine isopeptide (Lys-Gly) (interchain with G-Cter in SUMO2); alternate). The residue at position 86 (Thr-86) is a Phosphothreonine. Residues 127-409 (ELIRNVTLCG…GIHLTKEELK (283 aa)) form the tr-type G domain. GTP-binding positions include 136–143 (GHLHHGKT), 204–208 (DTPGH), and 258–261 (NKID).

Belongs to the TRAFAC class translation factor GTPase superfamily. Classic translation factor GTPase family. EF-G/EF-2 subfamily. In terms of assembly, component of the U5 snRNP and the U4/U6-U5 tri-snRNP complex, a building block of the spliceosome. The U4/U6-U5 tri-snRNP complex is composed of the U4, U6 and U5 snRNAs and at least PRPF3, PRPF4, PRPF6, PRPF8, PRPF31, SNRNP200, TXNL4A, SNRNP40, DDX23, CD2BP2, PPIH, SNU13, EFTUD2, SART1 and USP39. Component of the pre-catalytic, catalytic and post-catalytic spliceosome complexes. Component of the minor spliceosome, which splices U12-type introns. Within this complex, interacts with CRIPT. Interacts with ERBB4 and PRPF8. Interacts with PIH1D1. Interacts with RPAP3 and URI1 in a ZNHIT2-dependent manner. Interacts with NRDE2. Interacts with FAM50A. Interacts with UBL5.

It localises to the nucleus. Its function is as follows. Required for pre-mRNA splicing as component of the spliceosome, including pre-catalytic, catalytic and post-catalytic spliceosomal complexes. Component of the U5 snRNP and the U4/U6-U5 tri-snRNP complex, a building block of the spliceosome. As a component of the minor spliceosome, involved in the splicing of U12-type introns in pre-mRNAs. The sequence is that of 116 kDa U5 small nuclear ribonucleoprotein component (EFTUD2) from Pongo abelii (Sumatran orangutan).